Reading from the N-terminus, the 390-residue chain is Calcium-binding and spermatid-specific protein 1 (390 aa).

3 disordered regions span residues 1 to 23 (MAED…TPTE), 82 to 109 (ASLK…KESI), and 146 to 225 (TIDA…TIPD). Residues 162-174 (ETQEDSSANDEDT) show a composition bias toward acidic residues. The segment covering 184–193 (TDVSSSTSSD) has biased composition (low complexity). S251 and S267 each carry phosphoserine. T280 carries the phosphothreonine; by CK2 modification. Residue S312 is modified to Phosphoserine. Over residues 330–344 (EPHVDTKNSPEKDAA) the composition is skewed to basic and acidic residues. Positions 330 to 390 (EPHVDTKNSP…LKEEPDELMM (61 aa)) are disordered. Phosphoserine is present on residues S346, S356, S371, and S375. Residues 346 to 364 (SVTNVTEEFPSVTSVVEQS) are compositionally biased toward polar residues.

As to expression, expressed in seminiferous tubules of the testis in step 10 spermatids (stage X), subsequently increasing to reach maximal levels of step 18 elongated spermatids (stage VI) (at protein level). Strongly expressed in testis. Weakly expressed in olfactory epithelium. Expressed in spermatids of seminiferous tubules at steps 4-14 (stages IV to XIV of the seminiferous epithelium classification).

It localises to the cytoplasm. Its subcellular location is the mitochondrion inner membrane. It is found in the cell projection. The protein localises to the cilium. The protein resides in the flagellum. It localises to the cytoplasmic vesicle. Its subcellular location is the secretory vesicle. It is found in the acrosome. Its function is as follows. Calcium-binding protein. Essential for maintaining the structural integrity of the sperm flagella. The chain is Calcium-binding and spermatid-specific protein 1 (Cabs1) from Rattus norvegicus (Rat).